A 95-amino-acid chain; its full sequence is Small ribosomal subunit protein bS6 (95 aa).

Belongs to the bacterial ribosomal protein bS6 family.

Its function is as follows. Binds together with bS18 to 16S ribosomal RNA. This Desulfitobacterium hafniense (strain DSM 10664 / DCB-2) protein is Small ribosomal subunit protein bS6.